The following is a 118-amino-acid chain: UPF0251 protein Teth39_0655 (118 aa).

Belongs to the UPF0251 family.

The protein is UPF0251 protein Teth39_0655 of Thermoanaerobacter pseudethanolicus (strain ATCC 33223 / 39E) (Clostridium thermohydrosulfuricum).